The following is a 360-amino-acid chain: MAKDDKKKALDIALKKIEKDFGKGAVMRMGEKVDTQISTIPSGSLALDAALGVGGYPRGRIIEVYGPESSGKTTVALHAVAEVQKRGGTAAYIDAENAMDPAYAEALGVDIDSLILSQPNTGEEGLQIADTLIASGAIDILVVDSVAALVPRAEIDGDMGDSHVGLQARLMSQALRKLSGNISKTKTIAVFINQIREKVGVMFGNPETTPGGRALKFYSTIRLEVRRAEQIKQGSDVIGNRVKLKVVKNKVAPPFKVAEVDIMYGKGISQTGELIDMAADKDIIKKAGSWYSYGDDRIGQGRENAKQYLEEHPDVYEEVKEKVREAYGIDAKAIEERENPEKVKQDKEVPVNKDASDEKK.

Glycine 66 to threonine 73 provides a ligand contact to ATP. The segment at aspartate 330–lysine 360 is disordered.

It belongs to the RecA family.

The protein localises to the cytoplasm. In terms of biological role, can catalyze the hydrolysis of ATP in the presence of single-stranded DNA, the ATP-dependent uptake of single-stranded DNA by duplex DNA, and the ATP-dependent hybridization of homologous single-stranded DNAs. It interacts with LexA causing its activation and leading to its autocatalytic cleavage. The chain is Protein RecA from Lactobacillus johnsonii (strain CNCM I-12250 / La1 / NCC 533).